Reading from the N-terminus, the 245-residue chain is NAD(P)H-hydrate epimerase (245 aa).

The 209-residue stretch at 16-224 (AAALDAELMA…HIADKYDLEV (209 aa)) folds into the YjeF N-terminal domain. 68-72 (NNGGD) contributes to the (6S)-NADPHX binding site. The K(+) site is built by Asn69 and Asp131. (6S)-NADPHX-binding positions include 135–141 (GFSFKPP) and Asp164. Ser167 contacts K(+).

The protein belongs to the NnrE/AIBP family. The cofactor is K(+).

The protein resides in the cytoplasm. The protein localises to the mitochondrion. The catalysed reaction is (6R)-NADHX = (6S)-NADHX. It carries out the reaction (6R)-NADPHX = (6S)-NADPHX. Catalyzes the epimerization of the S- and R-forms of NAD(P)HX, a damaged form of NAD(P)H that is a result of enzymatic or heat-dependent hydration. This is a prerequisite for the S-specific NAD(P)H-hydrate dehydratase to allow the repair of both epimers of NAD(P)HX. This is NAD(P)H-hydrate epimerase from Yarrowia lipolytica (strain CLIB 122 / E 150) (Yeast).